We begin with the raw amino-acid sequence, 278 residues long: Esterase dbaE (278 aa).

Residues Ser-124, Asp-220, and His-248 each act as charge relay system in the active site.

The protein belongs to the LovG family.

It functions in the pathway secondary metabolite biosynthesis. In terms of biological role, esterase; part of the gene cluster that mediates the biosynthesis of the antibiotic 2,4-dihydroxy-3-methyl-6-(2-oxopropyl)benzaldehyde (DHMBA) and its derivatives. The direct non-reducing polyketide synthase dbaI product is 2,4-dihydroxy-3-methyl-6-(2-oxopropyl)benzaldehyde (DHMBA), produced by condensation of one acetyl-CoA starter unit with 4 malonyl-CoA units and one methylation step. The FAD-dependent monooxygenase dbaH is responsible for the synthesis of yellow pigments derived from the oxidation of DHMBA. The roles of dbaB, C, E and F have still to be determined. In Emericella nidulans (strain FGSC A4 / ATCC 38163 / CBS 112.46 / NRRL 194 / M139) (Aspergillus nidulans), this protein is Esterase dbaE.